Consider the following 556-residue polypeptide: 2-succinyl-5-enolpyruvyl-6-hydroxy-3-cyclohexene-1-carboxylate synthase (556 aa).

This sequence belongs to the TPP enzyme family. MenD subfamily. Homodimer. The cofactor is Mg(2+). Requires Mn(2+) as cofactor. Thiamine diphosphate serves as cofactor.

The catalysed reaction is isochorismate + 2-oxoglutarate + H(+) = 5-enolpyruvoyl-6-hydroxy-2-succinyl-cyclohex-3-ene-1-carboxylate + CO2. It participates in quinol/quinone metabolism; 1,4-dihydroxy-2-naphthoate biosynthesis; 1,4-dihydroxy-2-naphthoate from chorismate: step 2/7. The protein operates within quinol/quinone metabolism; menaquinone biosynthesis. Functionally, catalyzes the thiamine diphosphate-dependent decarboxylation of 2-oxoglutarate and the subsequent addition of the resulting succinic semialdehyde-thiamine pyrophosphate anion to isochorismate to yield 2-succinyl-5-enolpyruvyl-6-hydroxy-3-cyclohexene-1-carboxylate (SEPHCHC). The protein is 2-succinyl-5-enolpyruvyl-6-hydroxy-3-cyclohexene-1-carboxylate synthase of Escherichia coli O17:K52:H18 (strain UMN026 / ExPEC).